Consider the following 85-residue polypeptide: Cell division topological specificity factor (85 aa).

It belongs to the MinE family.

Functionally, prevents the cell division inhibition by proteins MinC and MinD at internal division sites while permitting inhibition at polar sites. This ensures cell division at the proper site by restricting the formation of a division septum at the midpoint of the long axis of the cell. This Xanthomonas campestris pv. campestris (strain 8004) protein is Cell division topological specificity factor.